Consider the following 74-residue polypeptide: ATP synthase subunit c (74 aa).

Transmembrane regions (helical) follow at residues 8-28 (FIGI…VSNI) and 52-72 (IGAG…MLLI).

The protein belongs to the ATPase C chain family. As to quaternary structure, F-type ATPases have 2 components, F(1) - the catalytic core - and F(0) - the membrane proton channel. F(1) has five subunits: alpha(3), beta(3), gamma(1), delta(1), epsilon(1). F(0) has three main subunits: a(1), b(2) and c(10-14). The alpha and beta chains form an alternating ring which encloses part of the gamma chain. F(1) is attached to F(0) by a central stalk formed by the gamma and epsilon chains, while a peripheral stalk is formed by the delta and b chains.

It localises to the cell inner membrane. Its function is as follows. F(1)F(0) ATP synthase produces ATP from ADP in the presence of a proton or sodium gradient. F-type ATPases consist of two structural domains, F(1) containing the extramembraneous catalytic core and F(0) containing the membrane proton channel, linked together by a central stalk and a peripheral stalk. During catalysis, ATP synthesis in the catalytic domain of F(1) is coupled via a rotary mechanism of the central stalk subunits to proton translocation. In terms of biological role, key component of the F(0) channel; it plays a direct role in translocation across the membrane. A homomeric c-ring of between 10-14 subunits forms the central stalk rotor element with the F(1) delta and epsilon subunits. This is ATP synthase subunit c from Rickettsia felis (strain ATCC VR-1525 / URRWXCal2) (Rickettsia azadi).